Reading from the N-terminus, the 225-residue chain is Uracil-DNA glycosylase (225 aa).

The active-site Proton acceptor is the aspartate 65.

Belongs to the uracil-DNA glycosylase (UDG) superfamily. UNG family.

Its subcellular location is the cytoplasm. It carries out the reaction Hydrolyzes single-stranded DNA or mismatched double-stranded DNA and polynucleotides, releasing free uracil.. In terms of biological role, excises uracil residues from the DNA which can arise as a result of misincorporation of dUMP residues by DNA polymerase or due to deamination of cytosine. This chain is Uracil-DNA glycosylase, found in Lysinibacillus sphaericus (strain C3-41).